The sequence spans 156 residues: ATP synthase subunit b (156 aa).

The chain crosses the membrane as a helical span at residues 7 to 27 (LIGQLIAFAIFVWFCMKYVWP).

The protein belongs to the ATPase B chain family. F-type ATPases have 2 components, F(1) - the catalytic core - and F(0) - the membrane proton channel. F(1) has five subunits: alpha(3), beta(3), gamma(1), delta(1), epsilon(1). F(0) has three main subunits: a(1), b(2) and c(10-14). The alpha and beta chains form an alternating ring which encloses part of the gamma chain. F(1) is attached to F(0) by a central stalk formed by the gamma and epsilon chains, while a peripheral stalk is formed by the delta and b chains.

Its subcellular location is the cell inner membrane. In terms of biological role, f(1)F(0) ATP synthase produces ATP from ADP in the presence of a proton or sodium gradient. F-type ATPases consist of two structural domains, F(1) containing the extramembraneous catalytic core and F(0) containing the membrane proton channel, linked together by a central stalk and a peripheral stalk. During catalysis, ATP synthesis in the catalytic domain of F(1) is coupled via a rotary mechanism of the central stalk subunits to proton translocation. Component of the F(0) channel, it forms part of the peripheral stalk, linking F(1) to F(0). The sequence is that of ATP synthase subunit b from Histophilus somni (strain 129Pt) (Haemophilus somnus).